The following is a 425-amino-acid chain: Tyrosine--tRNA ligase (425 aa).

Position 37 (Y37) interacts with L-tyrosine. The 'HIGH' region motif lies at P42–H51. Residues Y174 and Q178 each contribute to the L-tyrosine site. Positions K234–S238 match the 'KMSKS' region motif. K237 lines the ATP pocket. One can recognise an S4 RNA-binding domain in the interval D357 to V422.

The protein belongs to the class-I aminoacyl-tRNA synthetase family. TyrS type 1 subfamily. Homodimer.

Its subcellular location is the cytoplasm. The enzyme catalyses tRNA(Tyr) + L-tyrosine + ATP = L-tyrosyl-tRNA(Tyr) + AMP + diphosphate + H(+). Catalyzes the attachment of tyrosine to tRNA(Tyr) in a two-step reaction: tyrosine is first activated by ATP to form Tyr-AMP and then transferred to the acceptor end of tRNA(Tyr). This chain is Tyrosine--tRNA ligase, found in Laribacter hongkongensis (strain HLHK9).